Consider the following 206-residue polypeptide: MDLKITTLGGKDAGKVKLSEEIFGLDPREDILQRVVRWQLAKKQQGTHKAKGRAEIARTGAKMYKQKGTGRARHHSARAPQFRGGGKAHGPVVRSHEHDLPKNVRALGLKHALSAKAKSASIIVIDELKLTEAKTKALIANFATLGLSNALVIGGAELDKNFKLAATNIPNIDVLPIQGINVYDILRRGTLVLSKAAVEALEERFK.

Residues Met63–Arg94 are disordered. Residues Tyr64–Ala77 show a composition bias toward basic residues.

This sequence belongs to the universal ribosomal protein uL4 family. As to quaternary structure, part of the 50S ribosomal subunit.

Functionally, one of the primary rRNA binding proteins, this protein initially binds near the 5'-end of the 23S rRNA. It is important during the early stages of 50S assembly. It makes multiple contacts with different domains of the 23S rRNA in the assembled 50S subunit and ribosome. Forms part of the polypeptide exit tunnel. This is Large ribosomal subunit protein uL4 from Mesorhizobium japonicum (strain LMG 29417 / CECT 9101 / MAFF 303099) (Mesorhizobium loti (strain MAFF 303099)).